The following is a 171-amino-acid chain: Large ribosomal subunit protein bL9 (171 aa).

Belongs to the bacterial ribosomal protein bL9 family.

Binds to the 23S rRNA. This Rickettsia canadensis (strain McKiel) protein is Large ribosomal subunit protein bL9.